We begin with the raw amino-acid sequence, 310 residues long: Olfactory receptor 5P56 (310 aa).

At 1–25 (MEAQNHTTVKEFILLGLTENSTLRV) the chain is on the extracellular side. N-linked (GlcNAc...) asparagine glycans are attached at residues Asn5 and Asn20. The chain crosses the membrane as a helical span at residues 26-46 (ILFMIFLGIYTVTLVGNFSII). Residues 47-54 (SLIRSCPQ) lie on the Cytoplasmic side of the membrane. A helical membrane pass occupies residues 55-75 (LHTPMYLFLSHLALVDIGFST). Residues 76-99 (SITPIMLTGFLGHTVTLSVAACVA) are Extracellular-facing. An intrachain disulfide couples Cys97 to Cys189. Residues 100-120 (QFCIAVTFGTVECFLLAVMAY) form a helical membrane-spanning segment. The Cytoplasmic portion of the chain corresponds to 121 to 133 (DRYVAICSPLLYS). The chain crosses the membrane as a helical span at residues 134–154 (THMSPRICFLLVGASYVGGCV). Over 155–196 (NSGTFTSCLLILSFCGPNQIDHFFCDFPAVLKLSCSDVSIIG) the chain is Extracellular. A helical transmembrane segment spans residues 197–217 (IIPSISAGSIIVITVFVIAVS). The Cytoplasmic portion of the chain corresponds to 218-237 (YTYILITILNMRSTEGRHKA). Residues 238 to 258 (FSTCTSHLTAVTLYYGTITFI) traverse the membrane as a helical segment. Over 259-271 (YVMPKSNYSTAQN) the chain is Extracellular. Asn265 carries N-linked (GlcNAc...) asparagine glycosylation. The helical transmembrane segment at 272–292 (KILSVFYTVVIPMLNPLIYSL) threads the bilayer. The Cytoplasmic portion of the chain corresponds to 293–310 (RNRDVKEALRKAIIRIFP).

The protein belongs to the G-protein coupled receptor 1 family.

The protein resides in the cell membrane. Functionally, potential odorant receptor. This chain is Olfactory receptor 5P56, found in Mus musculus (Mouse).